A 713-amino-acid polypeptide reads, in one-letter code: Macrophage-expressed gene 1 protein (713 aa).

Positions 1-19 (MNSFMALVLIWMIIACAEA) are cleaved as a signal peptide. In terms of domain architecture, MACPF spans 30-345 (GFQICKNALK…TAVRHYYTFN (316 aa)). A disulfide bridge connects residues cysteine 34 and cysteine 70. 2 consecutive transmembrane segments (beta stranded) span residues 113–120 (LSINTELA) and 127–132 (GKFSTE). Residue asparagine 185 is glycosylated (N-linked (GlcNAc...) asparagine). 2 consecutive transmembrane segments (beta stranded) span residues 235–244 (TVTASAGIAF) and 248–256 (VNFKVETDY). Asparagine 269 carries N-linked (GlcNAc...) asparagine glycosylation. Cysteine 350 and cysteine 369 are oxidised to a cystine. N-linked (GlcNAc...) asparagine glycosylation is present at asparagine 375. Cystine bridges form between cysteine 385/cysteine 394, cysteine 432/cysteine 446, cysteine 436/cysteine 442, cysteine 531/cysteine 569, and cysteine 554/cysteine 574. The segment at 410–653 (PPGYSPVHLL…GDSNGMSGGE (244 aa)) is P2. The chain crosses the membrane as a helical span at residues 654-674 (AAGITLGVTIALGIVITLAIY).

This sequence belongs to the MPEG1 family. As to quaternary structure, homooligomer; predominantly forms a homooligomeric arc-shaped pore complex instead of complete rings of 16 subunits. Post-translationally, proteolytically processed in two steps to generate the Macrophage-expressed gene 1 protein, processed form: cleaved by trypsin in proximity of the helical transmembrane domain releases the ectodomain into the lysosomal lumen to orient the pore-forming domain toward the endogenous membranes, and processed by the asparagine endopeptidase (LGMN). Proteolytic processing in antigen-containing vesicles is pH-dependent. In terms of processing, monoubiquitinated in response to bacterial infection; ubiquitination is required for vesicular localization and antibacterial activity and can be blocked by bacterial cell cycle inhibiting factor (cif). Expressed constitutively in a variety of cell types including macrophages, microglia, neutrophils, T cells, marginal zone B cells, keratinocytes, splenocytes and intestinal epithelial cells.

Its subcellular location is the cytoplasmic vesicle membrane. The protein resides in the cytoplasmic vesicle. It localises to the phagosome membrane. Its activity is regulated as follows. Forms arc- and ring-shaped pre-pores on top of the membrane at neutral to slightly acidic pH conditions and converts to pores upon acidification. Undergoes transition from the pre-pore to the pore in a processive clockwise hand-over-hand process. In the pore state, 2 alpha-helical regions refold into transmembrane hairpins (TMH1 and TMH2) in each protomer that form in the ensemble complex giant beta-barrel transmembrane pores. Functionally, pore-forming protein involved in both innate and adaptive immunity. Plays a central role in antigen cross-presentation in dendritic cells by forming a pore in antigen-containing compartments, thereby promoting delivery of antigens for cross-presentation. Also involved in innate immune response following bacterial infection; shows antibacterial activity against a wide spectrum of Gram-positive, Gram-negative and acid-fast bacteria. Reduces the viability of the intracytosolic pathogen L.monocytogenes by inhibiting acidification of the phagocytic vacuole of host cells which restricts bacterial translocation from the vacuole to the cytosol. Required for the antibacterial activity of reactive oxygen species and nitric oxide. Its function is as follows. Pore-forming protein that plays a central role in antigen cross-presentation in dendritic cells by mediating delivery of antigens for cross-presentation. Dendritic cells bridge innate and adaptive immunity by capturing exogenous antigens on MHC class-I molecules and presenting them to naive CD8(+) T-cells. Acts by forming a pore in antigen-containing compartments, promoting the release of antigens into the cytosol, enabling generation of MHCI:peptide complexes and T-cell priming. In Mus musculus (Mouse), this protein is Macrophage-expressed gene 1 protein.